The sequence spans 95 residues: Cobalt transport protein CbiN (95 aa).

A run of 2 helical transmembrane segments spans residues 5 to 25 (HIILLAIVAIIIALPLIIYAG) and 67 to 87 (LLFALQAAIGAIIIGYYIGYY).

The protein belongs to the CbiN family. Forms an energy-coupling factor (ECF) transporter complex composed of an ATP-binding protein (A component, CbiO), a transmembrane protein (T component, CbiQ) and 2 possible substrate-capture proteins (S components, CbiM and CbiN) of unknown stoichimetry.

It is found in the cell membrane. The protein operates within cofactor biosynthesis; adenosylcobalamin biosynthesis. Part of the energy-coupling factor (ECF) transporter complex CbiMNOQ involved in cobalt import. The chain is Cobalt transport protein CbiN from Methanocaldococcus jannaschii (strain ATCC 43067 / DSM 2661 / JAL-1 / JCM 10045 / NBRC 100440) (Methanococcus jannaschii).